A 705-amino-acid polypeptide reads, in one-letter code: Polyribonucleotide nucleotidyltransferase (705 aa).

Mg(2+) is bound by residues aspartate 487 and aspartate 493. A KH domain is found at 554-613; it reads PKILTMKINPDKIRDVIGPSGKQINKIIEDTGVKIDIEQDGTIFISSTEEDMNQKAKKII. Positions 623–691 constitute an S1 motif domain; the sequence is GQLYLGKVKR…KQGRVNLSRK (69 aa).

This sequence belongs to the polyribonucleotide nucleotidyltransferase family. The cofactor is Mg(2+).

Its subcellular location is the cytoplasm. It carries out the reaction RNA(n+1) + phosphate = RNA(n) + a ribonucleoside 5'-diphosphate. Involved in mRNA degradation. Catalyzes the phosphorolysis of single-stranded polyribonucleotides processively in the 3'- to 5'-direction. The polypeptide is Polyribonucleotide nucleotidyltransferase (Bacillus pumilus (strain SAFR-032)).